We begin with the raw amino-acid sequence, 513 residues long: GMP synthase [glutamine-hydrolyzing] (513 aa).

Positions 9–198 (LILVLDFGSQ…IREICKCTGE (190 aa)) constitute a Glutamine amidotransferase type-1 domain. C86 acts as the Nucleophile in catalysis. Residues H172 and E174 contribute to the active site. The GMPS ATP-PPase domain maps to 199-388 (WTMENFIEIE…LGIPEHLVWR (190 aa)). ATP is bound at residue 226–232 (SGGVDSS).

In terms of assembly, homodimer.

It carries out the reaction XMP + L-glutamine + ATP + H2O = GMP + L-glutamate + AMP + diphosphate + 2 H(+). It functions in the pathway purine metabolism; GMP biosynthesis; GMP from XMP (L-Gln route): step 1/1. Catalyzes the synthesis of GMP from XMP. This Macrococcus caseolyticus (strain JCSC5402) (Macrococcoides caseolyticum) protein is GMP synthase [glutamine-hydrolyzing].